The primary structure comprises 732 residues: Catalase-peroxidase (732 aa).

A disordered region spans residues 1–23 (MSEQSRCPVTGRTADSPATGSGL). The tryptophyl-tyrosyl-methioninium (Trp-Tyr) (with M-246) cross-link spans 97-220 (WHSAGTYRTS…LAAVQMGLIY (124 aa)). The Proton acceptor role is filled by His-98. The segment at residues 220-246 (YVNPEGPDGKPDPVAAGRDIRETFARM) is a cross-link (tryptophyl-tyrosyl-methioninium (Tyr-Met) (with W-97)). Position 261 (His-261) interacts with heme b.

It belongs to the peroxidase family. Peroxidase/catalase subfamily. As to quaternary structure, homodimer or homotetramer. It depends on heme b as a cofactor. Formation of the three residue Trp-Tyr-Met cross-link is important for the catalase, but not the peroxidase activity of the enzyme.

It catalyses the reaction H2O2 + AH2 = A + 2 H2O. It carries out the reaction 2 H2O2 = O2 + 2 H2O. Functionally, bifunctional enzyme with both catalase and broad-spectrum peroxidase activity. This is Catalase-peroxidase from Prosthecochloris aestuarii (strain DSM 271 / SK 413).